We begin with the raw amino-acid sequence, 540 residues long: MEARMKKYSREVSPERAKVWTEKSPKYHQKIKKVQIVYYLSKNRQLEHPHFMEVLISSPNGLYLRDVIERLNVLRGRGMASMYSWSSKRSYRNGFVWHDLSEDDLILPANGNEYVLKGSELFDESNSDHFSPIVNLATQNMKQIVVEPPSSRSMDDSSSSSSMNNGKGTNKHSHEDDELSPPALRSVSSSGVSPDSRDAKNSSSWCLAEYKVYKSEGLADASTQTDETVSGRSKTPIETFSRGVSTDEDVSSEPETSENNLVSEASCAGKERESAEISRNSVSPPFSNSASSLGGKTDTLESLIRADVSKMNSFRILEQEDVRMPAIPRLRASNMLMQLISCGSISVKDNNFGLVPTYKPKFGHSKFPSPFFSSSFMMGDLDRLSETPSLMGLRMEEKEYFSGSLVETKLQKKDAADSNASLKRSSSYNGDRASNQMGVAENGDSKPDSSKNNPSSRKASSILGKQQPLVSEKRRDSSEDTTKNIPCTTKTHDACSKRITESLRKPDSFREDEERVIKIDERLASGARVRIESKVPSEEP.

Positions 32 to 123 (KKVQIVYYLS…YVLKGSELFD (92 aa)) are DIX-like oligomerization domain. Disordered stretches follow at residues 147–201 (EPPS…DAKN) and 219–294 (ADAS…SSLG). 2 stretches are compositionally biased toward low complexity: residues 150–163 (SSRS…SSSM) and 185–194 (RSVSSSGVSP). The segment covering 221–244 (ASTQTDETVSGRSKTPIETFSRGV) has biased composition (polar residues). Acidic residues predominate over residues 246 to 256 (TDEDVSSEPET). A compositionally biased stretch (low complexity) spans 280–292 (NSVSPPFSNSASS). The Association to cell membranes signature appears at 342-343 (CG). The disordered stretch occupies residues 412–492 (KKDAADSNAS…KNIPCTTKTH (81 aa)). The span at 418 to 437 (SNASLKRSSSYNGDRASNQM) shows a compositional bias: polar residues. The segment covering 471–482 (SEKRRDSSEDTT) has biased composition (basic and acidic residues).

The protein belongs to the SOSEKI family. Homodimer. Forms long polymer filaments with other SOKs proteins polymers (e.g. SOK1, SOK2, SOK3 and SOK4) crucial for polar localization and biological activity. Binds to ANGUSTIFOLIA (AN). As to expression, expressed during embryogenesis and in roots.

The protein resides in the cell membrane. Its function is as follows. SOSEKI proteins (SOK1-5) locally interpret global polarity cues and can influence cell division orientation to coordinate cell polarization relative to body axes, probably by guiding ANGUSTIFOLIA (AN) polarized localization. This is Protein SOSEKI 3 from Arabidopsis thaliana (Mouse-ear cress).